Here is a 195-residue protein sequence, read N- to C-terminus: Molybdenum cofactor guanylyltransferase (195 aa).

GTP contacts are provided by residues leucine 10–glycine 12, lysine 23, asparagine 51, aspartate 69, and aspartate 99. Residue aspartate 99 participates in Mg(2+) binding.

Belongs to the MobA family. In terms of assembly, monomer. Mg(2+) serves as cofactor.

It localises to the cytoplasm. The catalysed reaction is Mo-molybdopterin + GTP + H(+) = Mo-molybdopterin guanine dinucleotide + diphosphate. Functionally, transfers a GMP moiety from GTP to Mo-molybdopterin (Mo-MPT) cofactor (Moco or molybdenum cofactor) to form Mo-molybdopterin guanine dinucleotide (Mo-MGD) cofactor. The polypeptide is Molybdenum cofactor guanylyltransferase (Histophilus somni (strain 2336) (Haemophilus somnus)).